Here is a 212-residue protein sequence, read N- to C-terminus: tRNA (guanine-N(7)-)-methyltransferase (212 aa).

Positions 44, 69, 96, and 118 each coordinate S-adenosyl-L-methionine. Asp118 is an active-site residue. Lys122 provides a ligand contact to substrate. The segment at 124-129 (RHEKRR) is interaction with RNA. Residues Asp154 and 191–194 (TEYE) contribute to the substrate site.

Belongs to the class I-like SAM-binding methyltransferase superfamily. TrmB family.

It catalyses the reaction guanosine(46) in tRNA + S-adenosyl-L-methionine = N(7)-methylguanosine(46) in tRNA + S-adenosyl-L-homocysteine. The protein operates within tRNA modification; N(7)-methylguanine-tRNA biosynthesis. In terms of biological role, catalyzes the formation of N(7)-methylguanine at position 46 (m7G46) in tRNA. This Streptococcus sanguinis (strain SK36) protein is tRNA (guanine-N(7)-)-methyltransferase.